The sequence spans 238 residues: Small heat shock protein, chloroplastic (238 aa).

A disordered region spans residues 31–87; the sequence is APLSTGGRTRPLSVASAAQENRDNSVDVQVSQAQNAGNQQGNAVQRRPRRAGFDISP. Residues 58-75 are compositionally biased toward low complexity; the sequence is VQVSQAQNAGNQQGNAVQ. The sHSP domain maps to 124-238; that stretch reads AARARRRMPW…ERKVIDVQVQ (115 aa).

Belongs to the small heat shock protein (HSP20) family.

The protein resides in the plastid. It is found in the chloroplast. The polypeptide is Small heat shock protein, chloroplastic (HSP21) (Triticum aestivum (Wheat)).